Consider the following 293-residue polypeptide: 5'-3' exoribonuclease Rnm (293 aa).

Mn(2+)-binding residues include H17, H19, D24, H49, E76, H87, H202, D259, and H261.

Belongs to the PHP family. TrpH/YciV subfamily. It depends on Mn(2+) as a cofactor.

It catalyses the reaction a ribonucleoside 3',5'-bisphosphate + H2O = a ribonucleoside 5'-phosphate + phosphate. Exoribonuclease that catalyzes the last steps of 5S, 16S and 23S rRNA 5'-end maturation. Removes 3 nucleotides (nt) from the 5' end of 5S, 16S and 23S rRNA precursors to generate the mature 5' ends. 5S and 23S rRNA maturation occurs more efficiently and accurately on ribosomal particles as compared to free RNA. Efficiently catalyzes the hydrolysis of the 3'-phosphate from 3',5'-bis-phosphonucleotides as well as the successive hydrolysis of 5'-phosphomononucleotides from the 5'-end of short pieces of RNA and DNA, with no specificity toward the identity of the nucleotide base. Is more efficient at hydrolyzing RNA oligonucleotides than DNA oligonucleotides. This enzyme can also hydrolyze annealed DNA duplexes, albeit at a catalytic efficiency lower than that of the corresponding single-stranded oligonucleotides. The polypeptide is 5'-3' exoribonuclease Rnm (Salmonella typhimurium (strain LT2 / SGSC1412 / ATCC 700720)).